The chain runs to 30 residues: Sillucin (30 aa).

Cystine bridges form between Cys2–Cys7, Cys12–Cys24, Cys13–Cys30, and Cys14–Cys21.

The protein resides in the secreted. Sillucin is an antimicrobial agent produced by the thermophilic fungus Rhizomucor pusillus in liquid culture; it is effective against Gram-positive bacteria at the level of RNA metabolism. The chain is Sillucin from Rhizomucor pusillus.